Here is a 332-residue protein sequence, read N- to C-terminus: MSLDQKGLKKRSVTVAYFFENIGTTHDIKLRRLNSVDEQKRRIFERDLHRPGLALSGFTNLFTYKRVQILGNTETRFLNHLGEEERRQAFDNLVRFKVPCIILTSNNKLQPDLLEMATEQGIPVFVTRHSSTKAIYQVTDFLDDQFSLYQQYHGSMVDVYGVGVLLIGKSGLGKSEIALDLVERGHGLVADDVVVIRRKGESMQLSASRNNIIDHFMEIRGLGVVDVKANFGIRAIRDVKEVLVVAELLEWNKEMEYERLGLDTKSTKVLGVDVPLVQLPIFPGKNITVIIEVVALNVLLKRYSNYVAAEALTDRIKQVIKNDERTEGEIVL.

Catalysis depends on residues H153 and K174. ATP is bound at residue 168-175; sequence GKSGLGKS. Residue S175 participates in Mg(2+) binding. The Proton acceptor; for phosphorylation activity. Proton donor; for dephosphorylation activity role is filled by D192. An important for the catalytic mechanism of both phosphorylation and dephosphorylation region spans residues 217–226; it reads MEIRGLGVVD. A Mg(2+)-binding site is contributed by E218. The active site involves R259. The interval 280 to 285 is important for the catalytic mechanism of dephosphorylation; sequence PIFPGK.

Belongs to the HPrK/P family. Homohexamer. It depends on Mg(2+) as a cofactor.

The enzyme catalyses [HPr protein]-L-serine + ATP = [HPr protein]-O-phospho-L-serine + ADP + H(+). It carries out the reaction [HPr protein]-O-phospho-L-serine + phosphate + H(+) = [HPr protein]-L-serine + diphosphate. Catalyzes the ATP- as well as the pyrophosphate-dependent phosphorylation of a specific serine residue in HPr, a phosphocarrier protein of the phosphoenolpyruvate-dependent sugar phosphotransferase system (PTS). HprK/P also catalyzes the pyrophosphate-producing, inorganic phosphate-dependent dephosphorylation (phosphorolysis) of seryl-phosphorylated HPr (P-Ser-HPr). The polypeptide is HPr kinase/phosphorylase (Chlorobium phaeovibrioides (strain DSM 265 / 1930) (Prosthecochloris vibrioformis (strain DSM 265))).